Consider the following 273-residue polypeptide: Esterase pigG (273 aa).

Catalysis depends on charge relay system residues S122, D215, and H243.

The protein belongs to the LovG family.

It participates in secondary metabolite biosynthesis. Its function is as follows. Esterase; part of the gene cluster that mediates the biosynthesis of azaphilone pigments (MonAzPs), a complex mixture of compounds with a common azaphilone skeleton very widely used as food colorants. Within the pathway, pigG may assist the nrPKS pigA in the biosynthesis of the hexaketide precursor. The first step of the pathway is performed by the nrPKS pigA that forms the hexaketide precursor from successive condensations of five malonyl-CoA units, with a simple acetyl-CoA starter unit. The role of esterase pigG is not clear, but it may play at most a supplementary role in the formation of the benzaldehyde produced by the pigA nrPKS. This very reactive benzaldehyde is intercepted by the pigC ketoreductase that to provide the first stable enzyme-free MonAzPs intermediate, 6-(4-hydroxy-2-oxopentyl)-3-methyl-2,4-dioxocyclohexane carbaldehyde, also known as M7PKS-1. The FAD-dependent monooxygenase pigN hydroxylates M7PKS-1 at C-4, which triggers the formation of the pyran ring. PigJ, pigK and pigD are involved in the acetylation of the pyran ring. PigJ and pigK form the two subunits of a dedicated fungal FAS that produces the side chain fatty acyl moiety of MonAzPs and pigD transfers the fatty acyl chain to the C-4 alcohol. PigM and pigO are involved in the elimination of the omega-1 alcohol. PigM acts as an O-acetyltransferase that synthesizes the putative O-11 acetyl intermediate whereas pigO eliminates acetic acid to yield an intermediate with a C10(11) double bond. The dehydration of the C-11 alcohol followed by the reduction of the C6(7) double bond by the NAD(P)H-dependent oxidoreductase pigE increases the electrophilicity of the C-5 ketone of the resulting acyl benzopyran. This in turn sets up the C-5 ketone for an intramolecular Knoevenagel aldol condensation with the C-20 enol of the side chain. This condensation affords the characteristic linear tricyclic carbon skeletons of the yellow pigments that serve as the common precursors for the classical yellow pigments monascin and ankaflavin, orange pigments rubopunctatin and monascorubrin, and red pigments ribropunctamine and monascorubramine. The FAD-dependent oxidoreductase pigF is especially invoved in the biosynthesis of orange and red pigments via desaturation of C6(7). This Monascus ruber (Mold) protein is Esterase pigG.